Here is a 425-residue protein sequence, read N- to C-terminus: Serine--tRNA ligase (425 aa).

Thr-230–Glu-232 contributes to the L-serine binding site. Arg-261–Glu-263 is an ATP binding site. Glu-284 contacts L-serine. ATP is bound at residue Glu-348–Ser-351. Ser-384 lines the L-serine pocket.

The protein belongs to the class-II aminoacyl-tRNA synthetase family. Type-1 seryl-tRNA synthetase subfamily. Homodimer. The tRNA molecule binds across the dimer.

It localises to the cytoplasm. It carries out the reaction tRNA(Ser) + L-serine + ATP = L-seryl-tRNA(Ser) + AMP + diphosphate + H(+). It catalyses the reaction tRNA(Sec) + L-serine + ATP = L-seryl-tRNA(Sec) + AMP + diphosphate + H(+). It functions in the pathway aminoacyl-tRNA biosynthesis; selenocysteinyl-tRNA(Sec) biosynthesis; L-seryl-tRNA(Sec) from L-serine and tRNA(Sec): step 1/1. Its function is as follows. Catalyzes the attachment of serine to tRNA(Ser). Is also able to aminoacylate tRNA(Sec) with serine, to form the misacylated tRNA L-seryl-tRNA(Sec), which will be further converted into selenocysteinyl-tRNA(Sec). This Streptococcus pyogenes serotype M3 (strain SSI-1) protein is Serine--tRNA ligase.